The sequence spans 847 residues: Alpha-glucuronidase (847 aa).

The first 19 residues, 1 to 19, serve as a signal peptide directing secretion; it reads MVIRSLLLLLLAAIVPVFA. Asparagine 52, asparagine 238, asparagine 321, asparagine 353, asparagine 586, asparagine 692, asparagine 740, and asparagine 767 each carry an N-linked (GlcNAc...) asparagine glycan.

Belongs to the glycosyl hydrolase 67 family.

It is found in the secreted. It carries out the reaction an alpha-D-glucuronoside + H2O = D-glucuronate + an alcohol. Functionally, releases 4-O-methylglucuronic acid from xylan. This chain is Alpha-glucuronidase, found in Hypocrea jecorina (Trichoderma reesei).